The primary structure comprises 487 residues: ATP synthase subunit beta (487 aa).

164–171 is an ATP binding site; it reads GGAGVGKT.

Belongs to the ATPase alpha/beta chains family. As to quaternary structure, F-type ATPases have 2 components, CF(1) - the catalytic core - and CF(0) - the membrane proton channel. CF(1) has five subunits: alpha(3), beta(3), gamma(1), delta(1), epsilon(1). CF(0) has four main subunits: a(1), b(1), b'(1) and c(9-12).

The protein localises to the cellular thylakoid membrane. The catalysed reaction is ATP + H2O + 4 H(+)(in) = ADP + phosphate + 5 H(+)(out). In terms of biological role, produces ATP from ADP in the presence of a proton gradient across the membrane. The catalytic sites are hosted primarily by the beta subunits. The sequence is that of ATP synthase subunit beta from Synechococcus sp. (strain WH7803).